A 362-amino-acid chain; its full sequence is MGAMVPRTLLLLLAAALAPAQTRAGPHSLRYFETVVSRPGLGEPRFISVGYVDNTEFVRFDSDAENPRDEPRVRWMEQEGPEYWERETQIAKGNEQSFRVDLRTLLRYYNQSEGGSHTIQRLSGCDVGSDWRLLRGYEQFAYDGCDYIALNEDLKTWTAADMAALITKHKWEQAGAAERDRAYLEGTCVEWLRRYLELGNATLLHTDSPKAHVTHHPRSKVEVTLRCWALGFYPADITLTWQLNGEELTQDMELVETRPAGDGTFQKWASVVVPLGKEQNYTCHVYHEGLPEPLTLRWEPPPSTDSYMVIVAVLGVLGAVAIIGAVVAFVMMMRRNTGGKGGDYTLTPGSQSSEMSLPDCKA.

A signal peptide spans 1–24; that stretch reads MGAMVPRTLLLLLAAALAPAQTRA. An alpha-1 region spans residues 25–114; that stretch reads GPHSLRYFET…LLRYYNQSEG (90 aa). The Extracellular segment spans residues 25–306; the sequence is GPHSLRYFET…RWEPPPSTDS (282 aa). N110 carries N-linked (GlcNAc...) asparagine glycosylation. The tract at residues 115 to 206 is alpha-2; sequence GSHTIQRLSG…ELGNATLLHT (92 aa). C125 and C188 form a disulfide bridge. N-linked (GlcNAc...) asparagine glycans are attached at residues N200 and N280. Residues 207 to 298 form an alpha-3 region; sequence DSPKAHVTHH…GLPEPLTLRW (92 aa). Positions 209–297 constitute an Ig-like C1-type domain; it reads PKAHVTHHPR…EGLPEPLTLR (89 aa). Cysteines 227 and 283 form a disulfide. Residues 299–306 are connecting peptide; sequence EPPPSTDS. A helical transmembrane segment spans residues 307–333; it reads YMVIVAVLGVLGAVAIIGAVVAFVMMM. Residues 334–362 are Cytoplasmic-facing; that stretch reads RRNTGGKGGDYTLTPGSQSSEMSLPDCKA. A disordered region spans residues 340–362; sequence KGGDYTLTPGSQSSEMSLPDCKA. S353 and S356 each carry phosphoserine.

This sequence belongs to the MHC class I family. Heterodimer of an alpha chain and a beta chain (beta-2-microglobulin). Post-translationally, polyubiquitinated in case of infection by murid herpesvirus 4, by the viral E3 ligase K3 (mK3), leading to target the protein for rapid degradation by the endoplasmic reticulum-associated degradation (ERAD) system. Ubiquitination takes place on lysine, as well as serine and threonine residues present in the cytoplasmic tail. Hydroxylated serine and threonine residues in the cytoplasmic tail are subject to ubiquitination via ester bonds instead of the classical isopeptide linkage. In terms of processing, hydroxylation of residues in the cytoplasmic tail.

Its subcellular location is the membrane. Involved in the presentation of foreign antigens to the immune system. This is H-2 class I histocompatibility antigen, D-K alpha chain (H2-D1) from Mus musculus (Mouse).